A 110-amino-acid chain; its full sequence is UPF0213 protein DP2720 (110 aa).

Residues proline 12–threonine 88 form the GIY-YIG domain.

This sequence belongs to the UPF0213 family.

The polypeptide is UPF0213 protein DP2720 (Desulfotalea psychrophila (strain LSv54 / DSM 12343)).